A 347-amino-acid polypeptide reads, in one-letter code: Anthranilate phosphoribosyltransferase (347 aa).

5-phospho-alpha-D-ribose 1-diphosphate is bound by residues Gly-86, 89–90 (GD), Thr-94, 96–99 (NIST), 114–122 (KHGNRSVSS), and Ser-126. Residue Gly-86 participates in anthranilate binding. A Mg(2+)-binding site is contributed by Ser-98. Anthranilate is bound at residue Asn-117. An anthranilate-binding site is contributed by Arg-172. Residues Asp-230 and Glu-231 each coordinate Mg(2+).

Belongs to the anthranilate phosphoribosyltransferase family. As to quaternary structure, homodimer. Requires Mg(2+) as cofactor.

It catalyses the reaction N-(5-phospho-beta-D-ribosyl)anthranilate + diphosphate = 5-phospho-alpha-D-ribose 1-diphosphate + anthranilate. Its pathway is amino-acid biosynthesis; L-tryptophan biosynthesis; L-tryptophan from chorismate: step 2/5. Catalyzes the transfer of the phosphoribosyl group of 5-phosphorylribose-1-pyrophosphate (PRPP) to anthranilate to yield N-(5'-phosphoribosyl)-anthranilate (PRA). In Shewanella frigidimarina (strain NCIMB 400), this protein is Anthranilate phosphoribosyltransferase.